The following is a 154-amino-acid chain: Transmembrane protein 35B (154 aa).

Positions 1-22 (MALLLSVLRVLLGGFFALVGLA) are cleaved as a signal peptide. Transmembrane regions (helical) follow at residues 63-83 (IAVG…PPML), 85-105 (EISN…LAAL), and 112-132 (CIPA…QLLA).

The protein belongs to the DoxX family.

It is found in the membrane. This is Transmembrane protein 35B from Homo sapiens (Human).